Consider the following 457-residue polypeptide: MDHLPIFCQLRDRDCLIVGGGDVAERKARLLLEAGARLTVNALTFIPQFTVWVNEGMLTLVEGPFDETLLDSCWLAIAATDDDTVNQRVSEAAESRRIFCNVVDAPKAASFIMPSIIDRSPLMVAVSSGGTSPVLARLLREKLESLLPQHLGQVARYAGQLRARVKKQFATMGERRRFWEKFFVNDRLAQSLANADEKAVNATTEHLFSEPLDHRGEVVLVGAGPGDAGLLTLKGLQQIQQADIVVYDRLVSDDIMNLVRRDADRVFVGKRAGYHCVPQEEINQILLREAQKGKRVVRLKGGDPFIFGRGGEELETLCHAGIPFSVVPGITAASGCSAYSGIPLTHRDYAQSVRLVTGHLKTGGELDWENLAAEKQTLVFYMGLNQAATIQEKLIAFGMEANMPVALVENGTSVKQRVVHGVLTQLGELAQQVESPALIIVGRVVALRDKLNWFSNH.

A precorrin-2 dehydrogenase /sirohydrochlorin ferrochelatase region spans residues 1-204 (MDHLPIFCQL…ADEKAVNATT (204 aa)). NAD(+) is bound by residues 22 to 23 (DV) and 43 to 44 (LT). Serine 128 carries the post-translational modification Phosphoserine. The interval 216–457 (GEVVLVGAGP…RDKLNWFSNH (242 aa)) is uroporphyrinogen-III C-methyltransferase. An S-adenosyl-L-methionine-binding site is contributed by proline 225. Aspartate 248 acts as the Proton acceptor in catalysis. Catalysis depends on lysine 270, which acts as the Proton donor. Residues 301 to 303 (GGD), isoleucine 306, 331 to 332 (TA), methionine 382, and glycine 411 each bind S-adenosyl-L-methionine.

This sequence in the N-terminal section; belongs to the precorrin-2 dehydrogenase / sirohydrochlorin ferrochelatase family. It in the C-terminal section; belongs to the precorrin methyltransferase family.

It catalyses the reaction uroporphyrinogen III + 2 S-adenosyl-L-methionine = precorrin-2 + 2 S-adenosyl-L-homocysteine + H(+). The catalysed reaction is precorrin-2 + NAD(+) = sirohydrochlorin + NADH + 2 H(+). It carries out the reaction siroheme + 2 H(+) = sirohydrochlorin + Fe(2+). It participates in cofactor biosynthesis; adenosylcobalamin biosynthesis; precorrin-2 from uroporphyrinogen III: step 1/1. Its pathway is cofactor biosynthesis; adenosylcobalamin biosynthesis; sirohydrochlorin from precorrin-2: step 1/1. The protein operates within porphyrin-containing compound metabolism; siroheme biosynthesis; precorrin-2 from uroporphyrinogen III: step 1/1. It functions in the pathway porphyrin-containing compound metabolism; siroheme biosynthesis; siroheme from sirohydrochlorin: step 1/1. It participates in porphyrin-containing compound metabolism; siroheme biosynthesis; sirohydrochlorin from precorrin-2: step 1/1. In terms of biological role, multifunctional enzyme that catalyzes the SAM-dependent methylations of uroporphyrinogen III at position C-2 and C-7 to form precorrin-2 via precorrin-1. Then it catalyzes the NAD-dependent ring dehydrogenation of precorrin-2 to yield sirohydrochlorin. Finally, it catalyzes the ferrochelation of sirohydrochlorin to yield siroheme. This chain is Siroheme synthase, found in Salmonella typhi.